A 490-amino-acid polypeptide reads, in one-letter code: Glutamate--tRNA ligase (490 aa).

The 'HIGH' region signature appears at 15–25 (PSPTGYLHVGG). Positions 259–263 (KLSKR) match the 'KMSKS' region motif. K262 contributes to the ATP binding site.

The protein belongs to the class-I aminoacyl-tRNA synthetase family. Glutamate--tRNA ligase type 1 subfamily. Monomer.

It localises to the cytoplasm. The catalysed reaction is tRNA(Glu) + L-glutamate + ATP = L-glutamyl-tRNA(Glu) + AMP + diphosphate. Catalyzes the attachment of glutamate to tRNA(Glu) in a two-step reaction: glutamate is first activated by ATP to form Glu-AMP and then transferred to the acceptor end of tRNA(Glu). The chain is Glutamate--tRNA ligase from Bdellovibrio bacteriovorus (strain ATCC 15356 / DSM 50701 / NCIMB 9529 / HD100).